The primary structure comprises 424 residues: Tol-Pal system protein TolB (424 aa).

A signal peptide spans 1–16 (MKQLLVLILSLYTTLA).

It belongs to the TolB family. The Tol-Pal system is composed of five core proteins: the inner membrane proteins TolA, TolQ and TolR, the periplasmic protein TolB and the outer membrane protein Pal. They form a network linking the inner and outer membranes and the peptidoglycan layer.

The protein localises to the periplasm. Part of the Tol-Pal system, which plays a role in outer membrane invagination during cell division and is important for maintaining outer membrane integrity. This chain is Tol-Pal system protein TolB, found in Ruthia magnifica subsp. Calyptogena magnifica.